A 280-amino-acid polypeptide reads, in one-letter code: Formyltetrahydrofolate deformylase (280 aa).

Residues 8–86 enclose the ACT domain; the sequence is VLRTICPDQK…RELNPAGRRR (79 aa). Residue aspartate 225 is part of the active site.

This sequence belongs to the PurU family. As to quaternary structure, homohexamer.

It carries out the reaction (6R)-10-formyltetrahydrofolate + H2O = (6S)-5,6,7,8-tetrahydrofolate + formate + H(+). It functions in the pathway purine metabolism; IMP biosynthesis via de novo pathway; formate from 10-formyl-5,6,7,8-tetrahydrofolate: step 1/1. Activated by methionine, inhibited by glycine. Functionally, catalyzes the hydrolysis of 10-formyltetrahydrofolate (formyl-FH4) to formate and tetrahydrofolate (FH4). Provides the major source of formate for the PurT-dependent synthesis of 5'-phosphoribosyl-N-formylglycinamide (FGAR) during aerobic growth. Has a role in regulating the one-carbon pool. The chain is Formyltetrahydrofolate deformylase from Escherichia coli (strain K12).